A 387-amino-acid polypeptide reads, in one-letter code: Alkanesulfonate monooxygenase (387 aa).

This sequence belongs to the SsuD family.

It catalyses the reaction an alkanesulfonate + FMNH2 + O2 = an aldehyde + FMN + sulfite + H2O + 2 H(+). Its function is as follows. Catalyzes the desulfonation of aliphatic sulfonates. This Xanthomonas axonopodis pv. citri (strain 306) protein is Alkanesulfonate monooxygenase.